We begin with the raw amino-acid sequence, 700 residues long: MARTTPIERYRNIGISAHIDAGKTTTTERILFYTGVSHKIGEVHDGAATMDWMEQEQERGITITSAATTAFWSGMSQQFPQHRINVIDTPGHVDFTVEVERSMRVLDGAVMVYCAVGGVQPQSETVWRQANKYEVPRIAFVNKMDRTGANFLRVVEQLKTRLGANAIPLQLPVGAEENFTGVVDLIKMKAINWNEADQGMTFTYEEVPANMQADCEEWRQNLVEAAAEASEELMEKYLGGEDLTEEEIKSALRQRVLANEIILVTCGSAFKNKGVQAMLDAVVEYLPAPTDIPAIKGINPDETEGERHASDEEPFSSLAFKIATDPFVGNLTFFRVYSGVINSGDTVLNSVRQKRERFGRIVQMHANKREEIKEVRAGDIAAAIGLKDVTTGDTLCAIDAPIILERMEFPEPVISVAVEPKTKADQEKMGLALGRLAQEDPSFRVHTDEESGETIISGMGELHLDIIVDRMKREFKVEANIGKPQVSYRETIRTRVNDVEGKHAKQSGGRGQYGHVVIDLYPLDPEGPGYEFVNEIKGGVIPGEYIPAVDKGIQEQLKSGPLAGYPVVDLGVRLHFGSYHDVDSSELAFKLAASLAFKAAFSKANPVLLEPIMKVEVETPPEYVGDVIGDLSRRRAMVNGQEANEFVVKIDAEVPLSEMFGYATDLRSQTQGRASYSMEPLKYAEAPTSVAAAVIEARKK.

One can recognise a tr-type G domain in the interval 8–290 (ERYRNIGISA…AVVEYLPAPT (283 aa)). GTP contacts are provided by residues 17–24 (AHIDAGKT), 88–92 (DTPGH), and 142–145 (NKMD).

The protein belongs to the TRAFAC class translation factor GTPase superfamily. Classic translation factor GTPase family. EF-G/EF-2 subfamily.

It is found in the cytoplasm. In terms of biological role, catalyzes the GTP-dependent ribosomal translocation step during translation elongation. During this step, the ribosome changes from the pre-translocational (PRE) to the post-translocational (POST) state as the newly formed A-site-bound peptidyl-tRNA and P-site-bound deacylated tRNA move to the P and E sites, respectively. Catalyzes the coordinated movement of the two tRNA molecules, the mRNA and conformational changes in the ribosome. This is Elongation factor G from Haemophilus influenzae (strain PittEE).